Consider the following 508-residue polypeptide: Photosystem II CP47 reaction center protein (508 aa).

A run of 6 helical transmembrane segments spans residues 21-36, 101-115, 140-156, 203-218, 237-252, and 457-472; these read AVHI…WAGS, IVFS…IWHW, GIHL…FGAF, IAAG…FHLS, VLSS…AFVV, and TFAL…HGAR.

Belongs to the PsbB/PsbC family. PsbB subfamily. PSII is composed of 1 copy each of membrane proteins PsbA, PsbB, PsbC, PsbD, PsbE, PsbF, PsbH, PsbI, PsbJ, PsbK, PsbL, PsbM, PsbT, PsbX, PsbY, PsbZ, Psb30/Ycf12, at least 3 peripheral proteins of the oxygen-evolving complex and a large number of cofactors. It forms dimeric complexes. It depends on Binds multiple chlorophylls. PSII binds additional chlorophylls, carotenoids and specific lipids. as a cofactor.

Its subcellular location is the plastid. It localises to the chloroplast thylakoid membrane. Its function is as follows. One of the components of the core complex of photosystem II (PSII). It binds chlorophyll and helps catalyze the primary light-induced photochemical processes of PSII. PSII is a light-driven water:plastoquinone oxidoreductase, using light energy to abstract electrons from H(2)O, generating O(2) and a proton gradient subsequently used for ATP formation. This is Photosystem II CP47 reaction center protein from Agrostis stolonifera (Creeping bentgrass).